The primary structure comprises 168 residues: DOMON domain-containing protein Y73F4A.2 (168 aa).

The first 18 residues, 1-18 (MFRSIAVLSALLFAFASA), serve as a signal peptide directing secretion. In terms of domain architecture, DOMON spans 26-143 (SDFEVYWRFA…CQKWRFVKSG (118 aa)). Asparagine 36 is a glycosylation site (N-linked (GlcNAc...) asparagine). The segment at 148–168 (GQLTRNDKSPKEKKVCPMECN) is disordered. The span at 152–168 (RNDKSPKEKKVCPMECN) shows a compositional bias: basic and acidic residues.

It is found in the secreted. In Caenorhabditis elegans, this protein is DOMON domain-containing protein Y73F4A.2.